The sequence spans 128 residues: Fluoride-specific ion channel FluC (128 aa).

4 helical membrane passes run 5 to 25, 34 to 54, 67 to 87, and 99 to 119; these read LFISCGAILGASLRWAIGLLF, FGALIANLLGCLIIGVLLGLF, FLITGFLGSLTTFSSFSSEVV, and FCVLMMHLFGCLAMTVLGIWI. Gly-74 and Thr-77 together coordinate Na(+).

Belongs to the fluoride channel Fluc/FEX (TC 1.A.43) family.

It localises to the cell inner membrane. It catalyses the reaction fluoride(in) = fluoride(out). With respect to regulation, na(+) is not transported, but it plays an essential structural role and its presence is essential for fluoride channel function. Its function is as follows. Fluoride-specific ion channel. Important for reducing fluoride concentration in the cell, thus reducing its toxicity. The protein is Fluoride-specific ion channel FluC of Haemophilus influenzae (strain PittEE).